The primary structure comprises 356 residues: Uroporphyrinogen decarboxylase (356 aa).

Substrate contacts are provided by residues 27–31 (RQAGR), D77, Y154, S209, and H327.

The protein belongs to the uroporphyrinogen decarboxylase family. As to quaternary structure, homodimer.

Its subcellular location is the cytoplasm. It catalyses the reaction uroporphyrinogen III + 4 H(+) = coproporphyrinogen III + 4 CO2. Its pathway is porphyrin-containing compound metabolism; protoporphyrin-IX biosynthesis; coproporphyrinogen-III from 5-aminolevulinate: step 4/4. Functionally, catalyzes the decarboxylation of four acetate groups of uroporphyrinogen-III to yield coproporphyrinogen-III. The sequence is that of Uroporphyrinogen decarboxylase from Aromatoleum aromaticum (strain DSM 19018 / LMG 30748 / EbN1) (Azoarcus sp. (strain EbN1)).